Consider the following 569-residue polypeptide: Ribosome-inactivating protein SNAI' (569 aa).

The first 28 residues, 1 to 28 (MKVVATILYLVVLAICGLGIHGAHPTHS), serve as a signal peptide directing secretion. Asn40 carries N-linked (GlcNAc...) asparagine glycosylation. The active site involves Glu201. Intrachain disulfides connect Cys286–Cys311, Cys328–Cys347, and Cys369–Cys381. Ricin B-type lectin domains are found at residues 315-435 (EEVT…WIVG) and 437-565 (VEPL…WIAS). The stretch at 325–365 (DGFCAEVKNGDEKDGTPVQLSSCGEQSNQQWTFSTDGTIQS) is one 1-alpha repeat. One copy of the 1-beta repeat lies at 366–401 (LGKCLTTSSSVMIYNCKVVPPESTKWVVSIDGTITN). A 1-gamma repeat occupies 404–436 (SGLVLTAPKAAEGTLVSLEKNVHAARQGWIVGN). Residues 448–488 (EQMCLETNPGNNDVSLGDCSVKSASKVDQKWALYGDGTIRV) form a 2-alpha repeat. 2 disulfides stabilise this stretch: Cys451/Cys466 and Cys495/Cys512. Residues 492–530 (RSLCVTSEGKSSNEPIIILKCLGWANQRWVFNTDGTISN) form a 2-beta repeat. The stretch at 533–566 (SKLVMHVDQNDVPLRKIILSHPSGTSNQQWIAST) is one 2-gamma repeat.

The protein in the N-terminal section; belongs to the ribosome-inactivating protein family. Type 2 RIP subfamily. Disulfide-linked dimer of A and B chains.

The catalysed reaction is Endohydrolysis of the N-glycosidic bond at one specific adenosine on the 28S rRNA.. Its function is as follows. The A chain is responsible for inhibiting protein synthesis through the catalytic inactivation of 60S ribosomal subunits by removing adenine from position 4,324 of 28S rRNA. The B chain binds to cell receptors and probably facilitates the entry into the cell of the A chain; B chains are also responsible for cell agglutination (lectin activity). Agglutination is inhibited by Neu5Ac(alpha2,6)lactose, and N-linked glycoproteins such as fetuin and orosomucoid. In Sambucus nigra (European elder), this protein is Ribosome-inactivating protein SNAI'.